The following is a 1825-amino-acid chain: Serine protease/ABC transporter B family protein tagD (1825 aa).

An N-terminal signal peptide occupies residues 1 to 26 (MKSNTNIRVLLVSGLILIFIFLGIKF). The Peptidase S8 domain maps to 307–727 (PKAIFGTKDT…NAVFDTFAGA (421 aa)). Catalysis depends on charge relay system residues aspartate 338 and histidine 384. An N-linked (GlcNAc...) asparagine glycan is attached at asparagine 629. Serine 652 (charge relay system) is an active-site residue. Residues asparagine 704, asparagine 781, asparagine 849, and asparagine 896 are each glycosylated (N-linked (GlcNAc...) asparagine). A helical transmembrane segment spans residues 971-991 (YIVIIVAGGTMSLIITVLILI). Asparagine 1018 is a glycosylation site (N-linked (GlcNAc...) asparagine). The next 4 helical transmembrane spans lie at 1071–1091 (FIIEITISTACSLVATAASIL), 1116–1136 (FIIIFLLALLEFVFSTISSWI), 1189–1209 (GILLSVSVGICKFVGSLVFIF), and 1210–1230 (TISWKLSLAFFATVPVLAIVT). The 284-residue stretch at 1075–1358 (ITISTACSLV…LFGVYSSYVQ (284 aa)) folds into the ABC transmembrane type-1 domain. Asparagine 1295 carries an N-linked (GlcNAc...) asparagine glycan. 2 consecutive transmembrane segments (helical) span residues 1304–1324 (WLMVESLAFIILYFGAYLAIQ) and 1327–1347 (FTVGLLVSFSLYIGYVIDSST). Residues 1386–1529 (DNIIDTNQDN…NDDPNDNNGI (144 aa)) form a disordered region. Low complexity predominate over residues 1388–1402 (IIDTNQDNNNNNNND). The span at 1403 to 1415 (DISDSSSDDDDDN) shows a compositional bias: acidic residues. N-linked (GlcNAc...) asparagine glycosylation occurs at asparagine 1424. The span at 1465–1494 (GEGIDNNNNNNNDNNINDDNNQQDPNNNNN) shows a compositional bias: low complexity. The span at 1495–1514 (EIDDDGDDDGDDDDEGEDEN) shows a compositional bias: acidic residues. The segment covering 1515 to 1529 (NNNNNNDDPNDNNGI) has biased composition (low complexity). The ABC transporter domain maps to 1576 to 1813 (IEFKNVSFCY…KGKYYRMFAF (238 aa)). An N-linked (GlcNAc...) asparagine glycan is attached at asparagine 1580. 1611–1618 (GPSGSGKS) is a binding site for ATP. Residues asparagine 1715 and asparagine 1755 are each glycosylated (N-linked (GlcNAc...) asparagine).

This sequence in the C-terminal section; belongs to the ABC transporter superfamily. ABCB family. Multidrug resistance exporter (TC 3.A.1.201) subfamily. In the N-terminal section; belongs to the peptidase S8 family.

The protein resides in the membrane. This Dictyostelium discoideum (Social amoeba) protein is Serine protease/ABC transporter B family protein tagD (tagD).